We begin with the raw amino-acid sequence, 453 residues long: TATA box-binding protein-associated factor RNA polymerase I subunit A (453 aa).

As to quaternary structure, component of the transcription factor SL1/TIF-IB complex, composed of TBP and at least TAF1A, TAF1B, TAF1C and TAF1D. In the complex interacts directly with TBP, TAF1A and TAF1B. Interaction of the SL1/TIF-IB subunits with TBP excludes interaction of TBP with the transcription factor IID (TFIID) subunits. Interacts with UBFT. Interacts with CEBPA (isoform 1 and isoform 4). Part of Pol I pre-initiation complex (PIC), in which Pol I core assembles with RRN3 and promoter-bound UTBF and SL1/TIF-IB complex.

It localises to the nucleus. It is found in the nucleolus. Its function is as follows. Component of the transcription factor SL1/TIF-IB complex, which is involved in the assembly of the PIC (pre-initiation complex) during RNA polymerase I-dependent transcription. The rate of PIC formation probably is primarily dependent on the rate of association of SL1/TIF-IB with the rDNA promoter. SL1/TIF-IB is involved in stabilization of nucleolar transcription factor 1/UBTF on rDNA. Formation of SL1/TIF-IB excludes the association of TBP with TFIID subunits. The sequence is that of TATA box-binding protein-associated factor RNA polymerase I subunit A (Taf1a) from Mus musculus (Mouse).